We begin with the raw amino-acid sequence, 250 residues long: Ubiquinone/menaquinone biosynthesis C-methyltransferase UbiE (250 aa).

S-adenosyl-L-methionine is bound by residues Thr74, Asp94, 122–123, and Ser139; that span reads DA.

The protein belongs to the class I-like SAM-binding methyltransferase superfamily. MenG/UbiE family.

The enzyme catalyses a 2-demethylmenaquinol + S-adenosyl-L-methionine = a menaquinol + S-adenosyl-L-homocysteine + H(+). It carries out the reaction a 2-methoxy-6-(all-trans-polyprenyl)benzene-1,4-diol + S-adenosyl-L-methionine = a 5-methoxy-2-methyl-3-(all-trans-polyprenyl)benzene-1,4-diol + S-adenosyl-L-homocysteine + H(+). The protein operates within quinol/quinone metabolism; menaquinone biosynthesis; menaquinol from 1,4-dihydroxy-2-naphthoate: step 2/2. Its pathway is cofactor biosynthesis; ubiquinone biosynthesis. In terms of biological role, methyltransferase required for the conversion of demethylmenaquinol (DMKH2) to menaquinol (MKH2) and the conversion of 2-polyprenyl-6-methoxy-1,4-benzoquinol (DDMQH2) to 2-polyprenyl-3-methyl-6-methoxy-1,4-benzoquinol (DMQH2). The chain is Ubiquinone/menaquinone biosynthesis C-methyltransferase UbiE from Paracoccus denitrificans (strain Pd 1222).